Here is a 295-residue protein sequence, read N- to C-terminus: UDP-N-acetylenolpyruvoylglucosamine reductase (295 aa).

The FAD-binding PCMH-type domain maps to 26–189; that stretch reads VGGRADVLFK…VEAEFKGVNS (164 aa). Arg169 is a catalytic residue. Residue Cys218 is the Proton donor of the active site. Residue Glu288 is part of the active site.

Belongs to the MurB family. FAD is required as a cofactor.

It localises to the cytoplasm. The catalysed reaction is UDP-N-acetyl-alpha-D-muramate + NADP(+) = UDP-N-acetyl-3-O-(1-carboxyvinyl)-alpha-D-glucosamine + NADPH + H(+). It participates in cell wall biogenesis; peptidoglycan biosynthesis. Functionally, cell wall formation. The protein is UDP-N-acetylenolpyruvoylglucosamine reductase of Wolbachia pipientis wMel.